The chain runs to 369 residues: Aminomethyltransferase (369 aa).

This sequence belongs to the GcvT family. The glycine cleavage system is composed of four proteins: P, T, L and H.

The enzyme catalyses N(6)-[(R)-S(8)-aminomethyldihydrolipoyl]-L-lysyl-[protein] + (6S)-5,6,7,8-tetrahydrofolate = N(6)-[(R)-dihydrolipoyl]-L-lysyl-[protein] + (6R)-5,10-methylene-5,6,7,8-tetrahydrofolate + NH4(+). In terms of biological role, the glycine cleavage system catalyzes the degradation of glycine. This is Aminomethyltransferase from Rippkaea orientalis (strain PCC 8801 / RF-1) (Cyanothece sp. (strain PCC 8801)).